A 141-amino-acid chain; its full sequence is Large ribosomal subunit protein uL11 (141 aa).

It belongs to the universal ribosomal protein uL11 family. As to quaternary structure, part of the ribosomal stalk of the 50S ribosomal subunit. Interacts with L10 and the large rRNA to form the base of the stalk. L10 forms an elongated spine to which L12 dimers bind in a sequential fashion forming a multimeric L10(L12)X complex. Post-translationally, one or more lysine residues are methylated.

In terms of biological role, forms part of the ribosomal stalk which helps the ribosome interact with GTP-bound translation factors. The sequence is that of Large ribosomal subunit protein uL11 from Maridesulfovibrio salexigens (strain ATCC 14822 / DSM 2638 / NCIMB 8403 / VKM B-1763) (Desulfovibrio salexigens).